We begin with the raw amino-acid sequence, 360 residues long: Meiosis-inducing protein 1 (360 aa).

Positions 102–135 are disordered; it reads SKETKTTKDCTMATGPERGKKSSESTRSSSLSSL. The segment covering 126–135 has biased composition (low complexity); it reads STRSSSLSSL.

As to quaternary structure, interacts with UME6.

The protein localises to the nucleus. Its function is as follows. Transcription factor required for sporulation and for early sporulation-specific genes expression. Positive regulator of SME1/IME2 expression. Directly activates expression of SLZ1 during meiosis. The polypeptide is Meiosis-inducing protein 1 (IME1) (Saccharomyces cerevisiae (strain ATCC 204508 / S288c) (Baker's yeast)).